The sequence spans 44 residues: MFDISSILIRGGGVLIVVILLLWIVEHNEDFIDAKSMNYNNQTV.

Residues I4–I24 form a helical membrane-spanning segment.

Its subcellular location is the membrane. This is an uncharacterized protein from Ornithodoros (relapsing fever ticks).